A 510-amino-acid chain; its full sequence is GMP synthase [glutamine-hydrolyzing] (510 aa).

The Glutamine amidotransferase type-1 domain maps to 5–195; that stretch reads MIVVLDFGSQ…VFEVCGCRGD (191 aa). The Nucleophile role is filled by Cys82. Catalysis depends on residues His169 and Glu171. The region spanning 196 to 385 is the GMPS ATP-PPase domain; the sequence is WTMENFIDEQ…LGIPDEIVWR (190 aa). 223–229 contributes to the ATP binding site; it reads SGGVDSS.

As to quaternary structure, homodimer.

It carries out the reaction XMP + L-glutamine + ATP + H2O = GMP + L-glutamate + AMP + diphosphate + 2 H(+). It participates in purine metabolism; GMP biosynthesis; GMP from XMP (L-Gln route): step 1/1. In terms of biological role, catalyzes the synthesis of GMP from XMP. The chain is GMP synthase [glutamine-hydrolyzing] from Geobacillus kaustophilus (strain HTA426).